A 444-amino-acid chain; its full sequence is NAD(P)-specific glutamate dehydrogenase (444 aa).

Substrate-binding residues include Lys-88, Gln-109, and Lys-112. Lys-124 functions as the Proton donor in the catalytic mechanism. Gly-163 serves as a coordination point for substrate. Residues Thr-207 and Asn-238 each coordinate NADP(+). Ser-376 serves as a coordination point for substrate.

This sequence belongs to the Glu/Leu/Phe/Val dehydrogenases family. Homohexamer.

It catalyses the reaction L-glutamate + NAD(+) + H2O = 2-oxoglutarate + NH4(+) + NADH + H(+). The enzyme catalyses L-glutamate + NADP(+) + H2O = 2-oxoglutarate + NH4(+) + NADPH + H(+). In terms of biological role, catalyzes the reversible oxidative deamination of glutamate to alpha-ketoglutarate and ammonia. P.ruminicola possess both NADP(H)- and NAD(H)-dependent activities on the same enzyme, suggesting that both anabolic and catabolic forms of the enzyme might occur. The chain is NAD(P)-specific glutamate dehydrogenase (gdhA) from Xylanibacter ruminicola (Prevotella ruminicola).